A 57-amino-acid chain; its full sequence is Metallothionein-2 (57 aa).

The interval 1–28 (PDPCCNDKCDCKEGECKTGCKCTSCRCP) is beta. A divalent metal cation is bound by residues Cys-4, Cys-5, Cys-9, Cys-11, Cys-16, Cys-20, Cys-22, Cys-25, Cys-27, Cys-30, Cys-33, Cys-37, Cys-39, Cys-45, Cys-49, Cys-53, Cys-55, and Cys-56. The interval 29–57 (PCEQCSSGCKCANKEDCRKTCSKPCSCCP) is alpha.

Belongs to the metallothionein superfamily. Type 3 family.

In terms of biological role, metallothioneins have a high content of cysteine residues that bind various heavy metals. Class I MTS in marine crustacea are involved in the sequestration of elevated levels of heavy-metal ions. The chain is Metallothionein-2 from Scylla serrata (Mud crab).